A 137-amino-acid polypeptide reads, in one-letter code: Phosphoribosyl-ATP pyrophosphatase (137 aa).

Positions 114-124 (EGTSGIEEKAL) are enriched in basic and acidic residues. Residues 114–137 (EGTSGIEEKALRKSLQRAAEEAQP) form a disordered region.

The protein belongs to the PRA-PH family.

Its subcellular location is the cytoplasm. The enzyme catalyses 1-(5-phospho-beta-D-ribosyl)-ATP + H2O = 1-(5-phospho-beta-D-ribosyl)-5'-AMP + diphosphate + H(+). Its pathway is amino-acid biosynthesis; L-histidine biosynthesis; L-histidine from 5-phospho-alpha-D-ribose 1-diphosphate: step 2/9. In Paracidovorax citrulli (strain AAC00-1) (Acidovorax citrulli), this protein is Phosphoribosyl-ATP pyrophosphatase.